The primary structure comprises 491 residues: UDP-N-acetylmuramate--L-alanine ligase (491 aa).

Position 126 to 132 (126 to 132) interacts with ATP; that stretch reads GTHGKTT.

This sequence belongs to the MurCDEF family.

The protein localises to the cytoplasm. It catalyses the reaction UDP-N-acetyl-alpha-D-muramate + L-alanine + ATP = UDP-N-acetyl-alpha-D-muramoyl-L-alanine + ADP + phosphate + H(+). The protein operates within cell wall biogenesis; peptidoglycan biosynthesis. Cell wall formation. This Shigella flexneri protein is UDP-N-acetylmuramate--L-alanine ligase.